We begin with the raw amino-acid sequence, 456 residues long: UDP-glycosyltransferase 74D1 (456 aa).

UDP-alpha-D-glucose is bound by residues serine 279, 332-334 (SPQ), 349-357 (HCGWNSTLE), and 371-374 (YSDQ).

Belongs to the UDP-glycosyltransferase family. Expressed in leaves.

Glucosyltransferase that glucosylates jasmonate (JA) and JA derivatives. Also active on indole-3-acetic acid (IAA), 4-coumrate, cinnamate and caffeate. The protein is UDP-glycosyltransferase 74D1 (UGT74D1) of Arabidopsis thaliana (Mouse-ear cress).